A 117-amino-acid chain; its full sequence is Large ribosomal subunit protein bL19 (117 aa).

The protein belongs to the bacterial ribosomal protein bL19 family.

In terms of biological role, this protein is located at the 30S-50S ribosomal subunit interface and may play a role in the structure and function of the aminoacyl-tRNA binding site. The chain is Large ribosomal subunit protein bL19 from Kineococcus radiotolerans (strain ATCC BAA-149 / DSM 14245 / SRS30216).